The following is a 147-amino-acid chain: Flagellar assembly factor FliW (147 aa).

It belongs to the FliW family. As to quaternary structure, interacts with translational regulator CsrA and flagellin(s).

The protein localises to the cytoplasm. Acts as an anti-CsrA protein, binds CsrA and prevents it from repressing translation of its target genes, one of which is flagellin. Binds to flagellin and participates in the assembly of the flagellum. The sequence is that of Flagellar assembly factor FliW from Treponema denticola (strain ATCC 35405 / DSM 14222 / CIP 103919 / JCM 8153 / KCTC 15104).